The sequence spans 1131 residues: Phytochrome A (1131 aa).

Residues 1-23 (MSSSRPAHSSSSSSRTRQSSRAR) form a disordered region. Positions 219–404 (SMEALCNTVV…VFAVHVNKEF (186 aa)) constitute a GAF domain. Phytochromobilin is bound at residue C324. PAS domains are found at residues 620–690 (VTSE…LQGR) and 750–834 (VEGD…LAGE). Residues 904–1124 (YMRHAINKPL…TFILTAELAA (221 aa)) enclose the Histidine kinase domain.

This sequence belongs to the phytochrome family. Homodimer. Post-translationally, contains one covalently linked phytochromobilin chromophore.

Functionally, regulatory photoreceptor which exists in two forms that are reversibly interconvertible by light: the Pr form that absorbs maximally in the red region of the spectrum and the Pfr form that absorbs maximally in the far-red region. Photoconversion of Pr to Pfr induces an array of morphogenic responses, whereas reconversion of Pfr to Pr cancels the induction of those responses. Pfr controls the expression of a number of nuclear genes including those encoding the small subunit of ribulose-bisphosphate carboxylase, chlorophyll A/B binding protein, protochlorophyllide reductase, rRNA, etc. It also controls the expression of its own gene(s) in a negative feedback fashion. This chain is Phytochrome A (PHYA1), found in Zea mays (Maize).